The chain runs to 356 residues: UDP-3-O-acylglucosamine N-acyltransferase (356 aa).

The Proton acceptor role is filled by H242.

It belongs to the transferase hexapeptide repeat family. LpxD subfamily. Homotrimer.

It carries out the reaction a UDP-3-O-[(3R)-3-hydroxyacyl]-alpha-D-glucosamine + a (3R)-hydroxyacyl-[ACP] = a UDP-2-N,3-O-bis[(3R)-3-hydroxyacyl]-alpha-D-glucosamine + holo-[ACP] + H(+). Its pathway is bacterial outer membrane biogenesis; LPS lipid A biosynthesis. Functionally, catalyzes the N-acylation of UDP-3-O-acylglucosamine using 3-hydroxyacyl-ACP as the acyl donor. Is involved in the biosynthesis of lipid A, a phosphorylated glycolipid that anchors the lipopolysaccharide to the outer membrane of the cell. The sequence is that of UDP-3-O-acylglucosamine N-acyltransferase from Acinetobacter baylyi (strain ATCC 33305 / BD413 / ADP1).